The following is a 412-amino-acid chain: Maltoporin (412 aa).

Positions 1 to 22 are cleaved as a signal peptide; sequence MKKVSVIAAAVAATLAAGSAFA.

Belongs to the porin LamB (TC 1.B.3) family. Homotrimer formed of three 18-stranded antiparallel beta-barrels, containing three independent channels.

The protein resides in the cell outer membrane. It catalyses the reaction beta-maltose(in) = beta-maltose(out). Functionally, involved in the transport of maltose and maltodextrins. The polypeptide is Maltoporin (Vibrio cholerae serotype O1 (strain ATCC 39315 / El Tor Inaba N16961)).